The sequence spans 228 residues: Type II methyltransferase M.HhaII (228 aa).

It belongs to the N(4)/N(6)-methyltransferase family.

It carries out the reaction a 2'-deoxyadenosine in DNA + S-adenosyl-L-methionine = an N(6)-methyl-2'-deoxyadenosine in DNA + S-adenosyl-L-homocysteine + H(+). Functionally, a beta subtype methylase, recognizes the double-stranded sequence 5'-GANTC-3', methylates A-2 on both strands, and protects the DNA from cleavage by the HhaII endonuclease. This chain is Type II methyltransferase M.HhaII, found in Haemophilus parahaemolyticus.